Here is a 379-residue protein sequence, read N- to C-terminus: Putative cyclic ADP-D-ribose synthase TIR2 (379 aa).

Positions 254–379 (KVYDVFISHS…TISWTTGLVK (126 aa)) constitute a TIR domain. The active site involves Glu-335.

In terms of assembly, homodimer.

It is found in the cytoplasm. Activated upon phage infection. One of 2 TIR-like protein components of the Thoeris antiviral defense system, composed of ThsA, TIR1 (thsB1) and TIR2 (thsB2). Phage infection activates this protein; by 70 minutes post-infection with phage SPO1, TIR2 generates a signal molecule that in turn activates the NAD(+) hydrolase activity of ThsA (tested with B.cereus). The signal is similar to cyclic ADP-D-ribose, but how it differs is unknown. Expression of Thoeris in B.subtilis (strain BEST7003) confers resistance to phages phi29, phi3T, SPBeta, SBSphi11, SBSphi13, SBSphiJ, SPO1 and SPR but not SBSphiC. The TIR paralogs confer resistance to different phages; this subunit confers resistance to phi3T, SPBeta, SBSphi13, SBSphiJ, SPO1 and SPR but not phi29, SBSphi11 or SBSphiC. There is overlap in the phage range for this system, both TIR1 and TIR2 are activated by SBSphi13, SBSphiJ, SPO1 and SPR. Probably hydrolyzes NAD(+) to make a cyclic ADP-D-ribose (cADPR) signaling molecule; might make 3'cADPR. The protein is Putative cyclic ADP-D-ribose synthase TIR2 of Cytobacillus dafuensis (Bacillus dafuensis).